The following is a 513-amino-acid chain: Histidine ammonia-lyase (513 aa).

The segment at residues 144–146 (ASG) is a cross-link (5-imidazolinone (Ala-Gly)). 2,3-didehydroalanine (Ser) is present on Ser145.

It belongs to the PAL/histidase family. Post-translationally, contains an active site 4-methylidene-imidazol-5-one (MIO), which is formed autocatalytically by cyclization and dehydration of residues Ala-Ser-Gly.

The protein localises to the cytoplasm. It catalyses the reaction L-histidine = trans-urocanate + NH4(+). It participates in amino-acid degradation; L-histidine degradation into L-glutamate; N-formimidoyl-L-glutamate from L-histidine: step 1/3. This is Histidine ammonia-lyase from Streptococcus pyogenes serotype M18 (strain MGAS8232).